Here is a 369-residue protein sequence, read N- to C-terminus: Protein phosphatase 1 regulatory inhibitor subunit PPP1R8 homolog (369 aa).

The segment covering 1–11 (MYGRSGLDRFK) has biased composition (basic and acidic residues). The disordered stretch occupies residues 1-26 (MYGRSGLDRFKKSQTSEPFSVSANPP). Residues 13–23 (SQTSEPFSVSA) show a composition bias toward polar residues. An FHA domain is found at 87–138 (HIFGRQHQTCDFVLDHQSVSRQHAAVVPHKNGSIFVIDLGSAHGTFVANERL). Residues 345-369 (VSQPAAETECGGVGEEDDNDDLFGD) form a disordered region. The span at 358–369 (GEEDDNDDLFGD) shows a compositional bias: acidic residues.

In terms of assembly, interacts with human protein phosphatase PPP1C.

Its function is as follows. Inhibitor of protein-phosphatase 1 (PP1). Binds to and inhibits PP1 activity. The protein is Protein phosphatase 1 regulatory inhibitor subunit PPP1R8 homolog of Arabidopsis thaliana (Mouse-ear cress).